A 245-amino-acid polypeptide reads, in one-letter code: Eukaryotic translation initiation factor 3 subunit K (245 aa).

The PCI domain occupies 46–227; sequence YDCYANLALL…EAKGTVVREN (182 aa).

This sequence belongs to the eIF-3 subunit K family. In terms of assembly, component of the eukaryotic translation initiation factor 3 (eIF-3) complex.

Its subcellular location is the cytoplasm. Component of the eukaryotic translation initiation factor 3 (eIF-3) complex, which is involved in protein synthesis of a specialized repertoire of mRNAs and, together with other initiation factors, stimulates binding of mRNA and methionyl-tRNAi to the 40S ribosome. The eIF-3 complex specifically targets and initiates translation of a subset of mRNAs involved in cell proliferation. The sequence is that of Eukaryotic translation initiation factor 3 subunit K from Phaeosphaeria nodorum (strain SN15 / ATCC MYA-4574 / FGSC 10173) (Glume blotch fungus).